We begin with the raw amino-acid sequence, 256 residues long: MARDEKTIFLFDVDGTLSESRAKMPEKMGKMLESLRRKVRIGFVGGSDLAKQKEQVGDNILEIFDYGFPENGVSFYKNGTLESQEKIIDVLGEEFYKEFANFVLRYLSDIDLPIKRGNFIEYRNSMINISPIGRNCSREERMKFFELDKKEKFREKMVTAMRDRFKDSCLVFSIGGQISIDCFPKGWDKTYCLRHIKKEGVENVYFFGDMTMEGGNDYEIYNHKDVHGISVGNPDDTYRKVDQALKKIGLGGLEEN.

Asp12 acts as the Nucleophile in catalysis. Mg(2+) contacts are provided by Asp12 and Asp14. Residue Asp14 is the Proton donor/acceptor of the active site. Residues Arg21, Arg123, Arg134, Arg141, Ser179, and Asp181 each contribute to the alpha-D-mannose 1-phosphate site. Asp209 lines the Mg(2+) pocket.

The protein belongs to the eukaryotic PMM family. As to quaternary structure, homodimer.

It localises to the cytoplasm. It catalyses the reaction alpha-D-mannose 1-phosphate = D-mannose 6-phosphate. The protein operates within nucleotide-sugar biosynthesis; GDP-alpha-D-mannose biosynthesis; alpha-D-mannose 1-phosphate from D-fructose 6-phosphate: step 2/2. Its function is as follows. Involved in the synthesis of the GDP-mannose and dolichol-phosphate-mannose required for a number of critical mannosyl transfer reactions. The protein is Phosphomannomutase (SEC53) of Encephalitozoon cuniculi (strain GB-M1) (Microsporidian parasite).